A 406-amino-acid chain; its full sequence is Phosphorylase b kinase gamma catalytic chain, liver/testis isoform (406 aa).

The 268-residue stretch at 24–291 (YDPKDIIGRG…AEQALQHPFF (268 aa)) folds into the Protein kinase domain. ATP-binding positions include 30 to 38 (IGRGVSSVV) and Lys-53. Asp-153 functions as the Proton acceptor in the catalytic mechanism. Positions 306 to 330 (QRFRVAVWTILAAGRVALSSHRLRP) are calmodulin-binding (domain-N). The segment at 346 to 370 (VRRLIDNCAFRLYGHWVKKGEQQNR) is calmodulin-binding (domain-C).

Belongs to the protein kinase superfamily. CAMK Ser/Thr protein kinase family. As to quaternary structure, hexadecamer of 4 heterotetramers, each composed of alpha, beta, gamma, and delta subunits. Alpha (PHKA1 or PHKA2) and beta (PHKB) are regulatory subunits, gamma (PHKG1 or PHKG2) is the catalytic subunit, and delta is calmodulin.

It catalyses the reaction 2 ATP + phosphorylase b = 2 ADP + phosphorylase a.. In terms of biological role, catalytic subunit of the phosphorylase b kinase (PHK), which mediates the neural and hormonal regulation of glycogen breakdown (glycogenolysis) by phosphorylating and thereby activating glycogen phosphorylase. May regulate glycogeneolysis in the testis. In vitro, phosphorylates PYGM. This Mus musculus (Mouse) protein is Phosphorylase b kinase gamma catalytic chain, liver/testis isoform (Phkg2).